The sequence spans 177 residues: Isopentenyl-diphosphate Delta-isomerase 2 (177 aa).

The Mn(2+) site is built by His24 and His30. A Nudix hydrolase domain is found at 28 to 160 (MLHRAFSIFV…PDVYTVWFKK (133 aa)). Cys65 is an active-site residue. Residue Cys65 participates in Mg(2+) binding. His67 is a binding site for Mn(2+). Glu85 serves as a coordination point for Mg(2+). 2 residues coordinate Mn(2+): Glu110 and Glu112. Residue Glu112 is part of the active site.

The protein belongs to the IPP isomerase type 1 family. As to quaternary structure, homodimer. Mg(2+) is required as a cofactor. The cofactor is Mn(2+).

The protein localises to the cytoplasm. It carries out the reaction isopentenyl diphosphate = dimethylallyl diphosphate. It participates in isoprenoid biosynthesis; dimethylallyl diphosphate biosynthesis; dimethylallyl diphosphate from isopentenyl diphosphate: step 1/1. Catalyzes the 1,3-allylic rearrangement of the homoallylic substrate isopentenyl (IPP) to its highly electrophilic allylic isomer, dimethylallyl diphosphate (DMAPP). This Photorhabdus laumondii subsp. laumondii (strain DSM 15139 / CIP 105565 / TT01) (Photorhabdus luminescens subsp. laumondii) protein is Isopentenyl-diphosphate Delta-isomerase 2.